The chain runs to 666 residues: LEAF RUST 10 DISEASE-RESISTANCE LOCUS RECEPTOR-LIKE PROTEIN KINASE-like 2.5 (666 aa).

The N-terminal stretch at M1–S30 is a signal peptide. The Extracellular segment spans residues A31–L275. N-linked (GlcNAc...) asparagine glycans are attached at residues N119, N141, N171, and N198. A helical transmembrane segment spans residues F276–I296. Residues L297–A666 are Cytoplasmic-facing. The Protein kinase domain maps to K348–L636. ATP-binding positions include I354–V362 and K376. Y420 carries the post-translational modification Phosphotyrosine. D471 (proton acceptor) is an active-site residue. Phosphothreonine is present on residues T508 and T511.

The protein belongs to the protein kinase superfamily. Ser/Thr protein kinase family.

The protein resides in the membrane. The catalysed reaction is L-seryl-[protein] + ATP = O-phospho-L-seryl-[protein] + ADP + H(+). It catalyses the reaction L-threonyl-[protein] + ATP = O-phospho-L-threonyl-[protein] + ADP + H(+). The polypeptide is LEAF RUST 10 DISEASE-RESISTANCE LOCUS RECEPTOR-LIKE PROTEIN KINASE-like 2.5 (Arabidopsis thaliana (Mouse-ear cress)).